Consider the following 403-residue polypeptide: Octaketide synthase 2 (403 aa).

Residue cysteine 174 is part of the active site. CoA is bound by residues serine 281 and 318–321 (GGRA).

It belongs to the thiolase-like superfamily. Chalcone/stilbene synthases family. In terms of assembly, homodimer.

It functions in the pathway secondary metabolite biosynthesis; flavonoid biosynthesis. Catalyzes the iterative condensations of 8 molecules of malonyl-CoA to produce aromatic octaketides, SEK4 and SEK4b, the products of the minimal polyketide synthase for the benzoisochromanequinone actinorhodin. May be involved in the biosynthesis of the octaketide barbaloin. This is Octaketide synthase 2 (PKS4) from Aloe arborescens (Kidachi aloe).